Consider the following 459-residue polypeptide: D(1)-like dopamine receptor (459 aa).

The Extracellular portion of the chain corresponds to 1–23 (MAQNFSTVGDGKQMLLERDSSKR). N-linked (GlcNAc...) asparagine glycosylation is present at Asn4. Residues 24 to 49 (VLTGCFLSLLIFTTLLGNTLVCVAVT) form a helical membrane-spanning segment. At 50-60 (KFRHLRSKVTN) the chain is on the cytoplasmic side. The helical transmembrane segment at 61-87 (FFVISLAISDLLVAILVMPWKAATEIM) threads the bilayer. Over 88–96 (GFWPFGEFC) the chain is Extracellular. Residues Cys96 and Cys187 are joined by a disulfide bond. Residues 97–119 (NIWVAFDIMCSTASILNLCVISV) traverse the membrane as a helical segment. Residues 120–138 (DRYWAISSPFRYERKMTPK) lie on the Cytoplasmic side of the membrane. A helical membrane pass occupies residues 139–164 (VACLMISVAWTLSVLISFIPVQLNWH). Topologically, residues 165 to 191 (KAQTASYVELNGTYAGDLPPDNCDSSL) are extracellular. The helical transmembrane segment at 192–216 (NRTYAISSSLISFYIPVAIMIVTYT) threads the bilayer. The Cytoplasmic segment spans residues 217-269 (RIYRIAQKQIRRISALERAAESAQNRHSSMGNSLSMESECSFKMSFKRETKVL). Residues 270–297 (KTLSVIMGVFVCCWLPFFILNCMVPFCE) traverse the membrane as a helical segment. Residues 298–311 (ADDTTDFPCISSTT) are Extracellular-facing. Residues 312–333 (FDVFVWFGWANSSLNPIIYAFN) traverse the membrane as a helical segment. Over 334–459 (ADFRKAFSIL…QNGQHKSMSC (126 aa)) the chain is Cytoplasmic.

The protein belongs to the G-protein coupled receptor 1 family.

It is found in the cell membrane. Its subcellular location is the cell projection. The protein localises to the cilium membrane. Its function is as follows. Receptor for dopamine. This Takifugu rubripes (Japanese pufferfish) protein is D(1)-like dopamine receptor (d14).